Consider the following 121-residue polypeptide: Phosphoribosyl-ATP pyrophosphatase (121 aa).

Belongs to the PRA-PH family.

Its subcellular location is the cytoplasm. The enzyme catalyses 1-(5-phospho-beta-D-ribosyl)-ATP + H2O = 1-(5-phospho-beta-D-ribosyl)-5'-AMP + diphosphate + H(+). Its pathway is amino-acid biosynthesis; L-histidine biosynthesis; L-histidine from 5-phospho-alpha-D-ribose 1-diphosphate: step 2/9. This chain is Phosphoribosyl-ATP pyrophosphatase, found in Nitrosospira multiformis (strain ATCC 25196 / NCIMB 11849 / C 71).